A 211-amino-acid chain; its full sequence is Arginine exporter protein ArgO (211 aa).

6 helical membrane-spanning segments follow: residues M1–P21, L37–G57, L68–L88, I111–V131, W147–A167, and A179–A199.

Belongs to the LysE/ArgO transporter (TC 2.A.75) family.

The protein resides in the cell inner membrane. It catalyses the reaction L-arginine(in) = L-arginine(out). Functionally, involved in the export of arginine. Important to control the intracellular level of arginine and the correct balance between arginine and lysine. The protein is Arginine exporter protein ArgO of Salmonella paratyphi A (strain ATCC 9150 / SARB42).